The sequence spans 487 residues: Sensor protein CseC (487 aa).

Positions 1–11 (MRGNLRRPGPA) are enriched in low complexity. Residues 1 to 41 (MRGNLRRPGPAGTAGPGRTGIRTSADGGRARPRTGAGTGVR) form a disordered region. The next 2 membrane-spanning stretches (helical) occupy residues 63–83 (ISAAIALVGALVALALSLVVH) and 185–205 (ALIIGSIAVVFGGSALGVLIG). One can recognise an HAMP domain in the interval 206-262 (GQLSRRLRKAAAAANQVAQGERDVRVRDAIGGVVRDETDDLARAVDAMADALQQRIE). A Histidine kinase domain is found at 270–472 (DIAHELRTPV…VAVLWLPEHA (203 aa)). His273 bears the Phosphohistidine; by autocatalysis mark.

It localises to the cell membrane. The enzyme catalyses ATP + protein L-histidine = ADP + protein N-phospho-L-histidine.. This chain is Sensor protein CseC (cseC), found in Streptomyces avermitilis (strain ATCC 31267 / DSM 46492 / JCM 5070 / NBRC 14893 / NCIMB 12804 / NRRL 8165 / MA-4680).